A 624-amino-acid polypeptide reads, in one-letter code: uncharacterized protein (624 aa).

Residues 113–249 (SINVRTSATT…RFHPVTDINK (137 aa)) are disordered. Over residues 118-225 (TSATTTESTN…ATTTESTNAS (108 aa)) the composition is skewed to low complexity. Over residues 226–249 (AKEDANKDGNAEDNRFHPVTDINK) the composition is skewed to basic and acidic residues.

This is an uncharacterized protein from Saccharomyces cerevisiae (strain ATCC 204508 / S288c) (Baker's yeast).